The sequence spans 129 residues: Glycine cleavage system H protein (129 aa).

A Lipoyl-binding domain is found at 24–106 (EAVVGITEHA…YGAGWLFRIK (83 aa)). The residue at position 65 (K65) is an N6-lipoyllysine.

Belongs to the GcvH family. The glycine cleavage system is composed of four proteins: P, T, L and H. (R)-lipoate is required as a cofactor.

The glycine cleavage system catalyzes the degradation of glycine. The H protein shuttles the methylamine group of glycine from the P protein to the T protein. This chain is Glycine cleavage system H protein, found in Aeromonas hydrophila subsp. hydrophila (strain ATCC 7966 / DSM 30187 / BCRC 13018 / CCUG 14551 / JCM 1027 / KCTC 2358 / NCIMB 9240 / NCTC 8049).